The chain runs to 498 residues: MFSLQEICRKNIYFLPDWLSEHVIQRLGLYWEKHGSLQRIGDDYVLIQQDLIIPINEALRMAGEEGSDEVVQLLLLWEGNIHYAIIGALEGDHYSLIRKLYDQIEDCHDILPLIQDPKIFEKCHELDKSCNILCLVLHAVKNDMPCILQDYKTHLSGEDIQVVFETACRSQKYDIVRWMGQNIAIYNPEVIFNIAFDKINTTLLSIGYTLLFNHRINNMNENIDSLLTQHLEWAAGMGLLHFMLETLKYGGDVTIAVLSEAVKYDHRKVLDYFLRRKNLYQEDLEELLLLAIRADCSKKTLNLLLSYLNYSINNIRKKILQCVKEYETTIIIKILWKRKINLIGPILADFIGYHSYTYMVDFMREFSIHPEKMIKMAARESREDLIIKFSKNVCKEPKDRLHYLKSLVYTMRHKEGKQLLIYTIHNLYKACHLESKEMFNLARFYARHNAVIQFKSICQDLSKLNINIKNLLLECLRIAIKKNYPQLIRTIKTDMSYE.

Belongs to the asfivirus MGF 505 family.

Plays a role in virus cell tropism, and may be required for efficient virus replication in macrophages. This is Protein MGF 505-5R from Ornithodoros (relapsing fever ticks).